Reading from the N-terminus, the 129-residue chain is 3-oxo-4,17-pregnadiene-20-carboxyl-CoA hydratase beta subunit (129 aa).

Belongs to the thioester dehydratase family. As to quaternary structure, heterodimer composed of ChsH1 and ChsH2. Two heterodimers combine to form a heterotetramer. The complex interacts with Ltp2 via the DUF35 C-terminal region of ChsH2. The ChsH1-ChsH2-Ltp2 protein complex is composed of two protomers that form a heterohexameric structure through the Ltp2 dimerization interface.

It catalyses the reaction 3-oxochola-4,17-dien-22-oyl-CoA + H2O = 17-hydroxy-3-oxochol-4-en-22-oyl-CoA. The catalysed reaction is (2E)-octenoyl-CoA + H2O = 3-hydroxyoctanoyl-CoA. It carries out the reaction (2E)-decenoyl-CoA + H2O = 3-hydroxydecanoyl-CoA. It functions in the pathway steroid metabolism; cholesterol degradation. With respect to regulation, in the absence of the Ltp2 aldolase, ChsH1/ChsH2 can hydrate only about 30% of the 3-OPDC-CoA substrate. Complete turnover requires the presence of Ltp2. Its function is as follows. Involved in cholesterol side chain degradation. Catalyzes the hydration of 3-oxo-4,17-pregnadiene-20-carboxyl-CoA (3-OPDC-CoA) to form 17-hydroxy-3-oxo-4-pregnene-20-carboxyl-CoA (17-HOPC-CoA), in the modified beta-oxidation pathway for cholesterol side chain degradation. Can also use octenoyl-CoA and decenoyl-CoA, with lower efficiency. This is 3-oxo-4,17-pregnadiene-20-carboxyl-CoA hydratase beta subunit from Mycobacterium tuberculosis (strain ATCC 25618 / H37Rv).